Consider the following 370-residue polypeptide: Arginine kinase (370 aa).

In terms of domain architecture, Phosphagen kinase N-terminal spans 6–89 (QKKYPAKDDF…FDPVIEEYHN (84 aa)). Positions 115 to 358 (YVISSRVRTG…KVLIEMEKKL (244 aa)) constitute a Phosphagen kinase C-terminal domain. ATP contacts are provided by residues 118–122 (SSRVR) and His181. Glu222 is a binding site for substrate. Arg226 contributes to the ATP binding site. Residue Cys274 coordinates substrate. ATP is bound by residues 283–287 (RCSVH) and 311–316 (RGTSGE). A substrate-binding site is contributed by Glu316.

This sequence belongs to the ATP:guanido phosphotransferase family. As to quaternary structure, homodimer. In terms of processing, the N-terminus is blocked.

The catalysed reaction is L-arginine + ATP = N(omega)-phospho-L-arginine + ADP + H(+). The chain is Arginine kinase (AK) from Stichopus japonicus (Sea cucumber).